Consider the following 396-residue polypeptide: Initiation-specific alpha-1,6-mannosyltransferase (396 aa).

At 1 to 7 (MLRLRLR) the chain is on the cytoplasmic side. The helical; Signal-anchor for type II membrane protein transmembrane segment at 8-28 (SIVIGAAIAGSILLLFNHGSI) threads the bilayer. Residues 29–396 (EGMEDLTEIS…HFFAGSWKDD (368 aa)) lie on the Lumenal side of the membrane. Residues 229–231 (DID) carry the DXD motif motif. The N-linked (GlcNAc...) asparagine glycan is linked to N345.

Belongs to the glycosyltransferase 32 family. Mn(2+) is required as a cofactor.

Its subcellular location is the endoplasmic reticulum membrane. It is found in the golgi apparatus membrane. It carries out the reaction Transfers an alpha-D-mannosyl residue from GDP-mannose into lipid-linked oligosaccharide, forming an alpha-(1-&gt;6)-D-mannosyl-D-mannose linkage.. In terms of biological role, mannosyltransferase involved in outer chain elongation of asparagine-linked oligosaccharides of the type Man(9)GlcNAc(2). May otherwise add the first alpha-1,6-mannose to the Man(8)GlcNAc(2) core oligosaccharide from the ER. Represents the first enzymatic event required for synthesis of outer chain mannose linkages on yeast secretory proteins. This chain is Initiation-specific alpha-1,6-mannosyltransferase, found in Schizosaccharomyces pombe (strain 972 / ATCC 24843) (Fission yeast).